Reading from the N-terminus, the 1004-residue chain is Copper-transporting ATPase (1004 aa).

Residues 1–262 (MREVILAVHG…FWKKNSIKST (262 aa)) are Cytoplasmic-facing. HMA domains are found at residues 2 to 67 (REVI…FDCE) and 80 to 146 (KEGL…FDSN). Positions 13, 16, 91, and 94 each coordinate Cu(+). Residues 263 to 283 (LLAIICMLLYMIVPMMWPTIV) form a helical membrane-spanning segment. The Lumenal, vesicle portion of the chain corresponds to 284-303 (QDRIFPYKETSFVRGLFYRD). A helical membrane pass occupies residues 304 to 324 (ILGVILASYIQFSVGFYFYKA). Residues 325 to 335 (AWASLKHGSGT) are Cytoplasmic-facing. A helical membrane pass occupies residues 336–356 (MDTLVCVSTTCAYTFSVFSLV). The Lumenal, vesicle portion of the chain corresponds to 357–370 (HNMFHPSSTGKLPR). A helical membrane pass occupies residues 371 to 391 (IVFDTSIMIISYISIGKYLET). At 392–528 (LAKSQTSTAL…IQGYADYLAS (137 aa)) the chain is on the cytoplasmic side. A helical transmembrane segment spans residues 529-549 (IFVPGILILAVLTFFIWCFIL). The Lumenal, vesicle segment spans residues 550–577 (NISANPPVAFTANTKADNFFICLQTATS). The helical transmembrane segment at 578–598 (VVIVACPCALGLATPTAIMVG) threads the bilayer. At 599 to 901 (TGVGAQNGVL…LKTFKRIKLN (303 aa)) the chain is on the cytoplasmic side. The 4-aspartylphosphate intermediate role is filled by aspartate 627. Aspartate 838 and aspartate 842 together coordinate Mg(2+). The chain crosses the membrane as a helical span at residues 902-924 (LFWALCYNIFMIPIAMGVLIPWG). Residues 925–927 (ITL) are Lumenal, vesicle-facing. A helical transmembrane segment spans residues 928–950 (PPMLAGLAMAFSSVSVVLSSLML). Residues 951–1004 (KKWTPPDIESHGISDFKSKFSIGNFWSRLFSTRAIAGEQDIESQAGLMSNEEVL) are Cytoplasmic-facing.

This sequence belongs to the cation transport ATPase (P-type) (TC 3.A.3) family. Type IB subfamily. In terms of assembly, interacts with the copper chaperone ATX1 via the copper anion.

The protein localises to the golgi apparatus. The protein resides in the trans-Golgi network membrane. It catalyses the reaction Cu(+)(in) + ATP + H2O = Cu(+)(out) + ADP + phosphate + H(+). Its function is as follows. Copper-transporting P-type ATPase necessary for the proper uptake of iron. Required for export of copper from cytosol into extracytosolic compartment. Retrieves copper from the metallochaperone ATX1 and incorporates it into trans-Golgi vesicles where they are acquired by the cell-surface iron transporter FET3. Required the production of inositolphosphorylceramide D, probably by delivering copper to a yet to be identified enzyme. This Saccharomyces cerevisiae (strain ATCC 204508 / S288c) (Baker's yeast) protein is Copper-transporting ATPase.